Reading from the N-terminus, the 179-residue chain is Large ribosomal subunit protein uL6 (179 aa).

It belongs to the universal ribosomal protein uL6 family. In terms of assembly, part of the 50S ribosomal subunit.

This protein binds to the 23S rRNA, and is important in its secondary structure. It is located near the subunit interface in the base of the L7/L12 stalk, and near the tRNA binding site of the peptidyltransferase center. The protein is Large ribosomal subunit protein uL6 of Bifidobacterium longum subsp. infantis (strain ATCC 15697 / DSM 20088 / JCM 1222 / NCTC 11817 / S12).